A 427-amino-acid chain; its full sequence is Septin-8 (427 aa).

In terms of domain architecture, Septin-type G spans 39-305; sequence QGFCFNILCV…ELYRRCKLEE (267 aa). The segment at 49 to 56 is G1 motif; the sequence is GETGIGKS. GTP-binding positions include 49–56, Gly-104, 185–193, Gly-239, and Arg-254; these read GETGIGKS and KADTISKSE. Positions 101 to 104 are G3 motif; the sequence is DTVG. The G4 motif stretch occupies residues 184–187; it reads AKAD. Residues 321 to 409 adopt a coiled-coil conformation; that stretch reads QETYEAKRKE…KAAMEALQSQ (89 aa). Residues 373–427 form a disordered region; the sequence is RVHQEESKKVEDKRRDLEEEMNSFNRRKAAMEALQSQSFQATSQQPLKKDKDRKN. Basic and acidic residues predominate over residues 374–389; sequence VHQEESKKVEDKRRDL. Residues 406 to 418 are compositionally biased toward polar residues; that stretch reads LQSQSFQATSQQP.

The protein belongs to the TRAFAC class TrmE-Era-EngA-EngB-Septin-like GTPase superfamily. Septin GTPase family.

The protein resides in the cytoplasm. It is found in the cytoskeleton. Its subcellular location is the synapse. It localises to the cell projection. The protein localises to the axon. The protein resides in the cytoplasmic vesicle. It is found in the secretory vesicle. Its subcellular location is the synaptic vesicle membrane. It localises to the presynapse. This chain is Septin-8, found in Xenopus tropicalis (Western clawed frog).